A 358-amino-acid chain; its full sequence is Polyadenylate-binding protein-interacting protein 11 (358 aa).

The span at 1-19 (MAVVETGAAATAADAGGVV) shows a compositional bias: low complexity. The interval 1–45 (MAVVETGAAATAADAGGVVIQPPPSSPPSSMTSQDSGVSSDDQNH) is disordered. Residues 31 to 41 (MTSQDSGVSSD) show a composition bias toward polar residues. The PAM2-like motif lies at 92–102 (KLNPMAEEFVP). Positions 136 to 164 (GGYGNENGGFRRKKSFGQGKRRMNARTSM) are disordered. The segment covering 145-159 (FRRKKSFGQGKRRMN) has biased composition (basic residues). The Bipartite nuclear localization signal motif lies at 146–157 (RRKKSFGQGKRR). 2 consecutive RRM domains span residues 173-248 (RTVY…PSKT) and 270-346 (RTIY…PSKT).

As to expression, expressed in cauline leaves, stems, immature siliques and primary inflorescences.

It localises to the nucleus. This chain is Polyadenylate-binding protein-interacting protein 11 (CID11), found in Arabidopsis thaliana (Mouse-ear cress).